We begin with the raw amino-acid sequence, 853 residues long: Protein translocase subunit SecA (853 aa).

ATP-binding positions include glutamine 77, 95–99 (GEGKT), and aspartate 532.

It belongs to the SecA family. As to quaternary structure, monomer and homodimer. Part of the essential Sec protein translocation apparatus which comprises SecA, SecYEG and auxiliary proteins SecDF. Other proteins may also be involved.

Its subcellular location is the cell inner membrane. The protein resides in the cytoplasm. The catalysed reaction is ATP + H2O + cellular proteinSide 1 = ADP + phosphate + cellular proteinSide 2.. Functionally, part of the Sec protein translocase complex. Interacts with the SecYEG preprotein conducting channel. Has a central role in coupling the hydrolysis of ATP to the transfer of proteins into and across the cell membrane, serving as an ATP-driven molecular motor driving the stepwise translocation of polypeptide chains across the membrane. This Thermosipho melanesiensis (strain DSM 12029 / CIP 104789 / BI429) protein is Protein translocase subunit SecA.